A 154-amino-acid chain; its full sequence is Actin-related protein 2/3 complex subunit 5 (154 aa).

T142 is subject to Phosphothreonine.

The protein belongs to the ARPC5 family. Component of the Arp2/3 complex composed of ARP2, ARP3, ARC40/p41-ARC, ARC35/p34-ARC, ARC18/p21-ARC, ARC19/p20-ARC and ARC16/p16-ARC.

Its subcellular location is the cytoplasm. The protein localises to the cytoskeleton. It localises to the actin patch. Its function is as follows. Functions as a component of the Arp2/3 complex which is involved in regulation of actin polymerization and together with an activating nucleation-promoting factor (NPF) mediates the formation of branched actin networks. The sequence is that of Actin-related protein 2/3 complex subunit 5 (ARC15) from Saccharomyces cerevisiae (strain ATCC 204508 / S288c) (Baker's yeast).